A 309-amino-acid chain; its full sequence is Tagatose-6-phosphate kinase (309 aa).

It belongs to the carbohydrate kinase PfkB family. LacC subfamily.

The enzyme catalyses D-tagatofuranose 6-phosphate + ATP = D-tagatofuranose 1,6-bisphosphate + ADP + H(+). It functions in the pathway carbohydrate metabolism; D-tagatose 6-phosphate degradation; D-glyceraldehyde 3-phosphate and glycerone phosphate from D-tagatose 6-phosphate: step 1/2. The protein is Tagatose-6-phosphate kinase of Streptococcus pyogenes serotype M3 (strain SSI-1).